A 317-amino-acid polypeptide reads, in one-letter code: Acetyl-coenzyme A carboxylase carboxyl transferase subunit alpha (317 aa).

The 254-residue stretch at 40 to 293 folds into the CoA carboxyltransferase C-terminal domain; the sequence is LEVRVREAIV…GDVIANALGE (254 aa).

This sequence belongs to the AccA family. In terms of assembly, acetyl-CoA carboxylase is a heterohexamer composed of biotin carboxyl carrier protein (AccB), biotin carboxylase (AccC) and two subunits each of ACCase subunit alpha (AccA) and ACCase subunit beta (AccD).

The protein resides in the cytoplasm. The catalysed reaction is N(6)-carboxybiotinyl-L-lysyl-[protein] + acetyl-CoA = N(6)-biotinyl-L-lysyl-[protein] + malonyl-CoA. It participates in lipid metabolism; malonyl-CoA biosynthesis; malonyl-CoA from acetyl-CoA: step 1/1. Functionally, component of the acetyl coenzyme A carboxylase (ACC) complex. First, biotin carboxylase catalyzes the carboxylation of biotin on its carrier protein (BCCP) and then the CO(2) group is transferred by the carboxyltransferase to acetyl-CoA to form malonyl-CoA. The polypeptide is Acetyl-coenzyme A carboxylase carboxyl transferase subunit alpha (Rhizobium leguminosarum bv. trifolii (strain WSM2304)).